The chain runs to 797 residues: Outer membrane protein assembly factor BamA (797 aa).

The N-terminal stretch at 1 to 21 (MKLKQIASALMMLGISPLALA) is a signal peptide. 5 consecutive POTRA domains span residues 23 to 90 (FTIQ…VIER), 91 to 171 (PTIG…IDEG), 174 to 262 (AKIT…VHEG), 265 to 344 (FRWG…IEPG), and 347 to 421 (IYVN…LTER).

This sequence belongs to the BamA family. As to quaternary structure, part of the Bam complex.

The protein localises to the cell outer membrane. Part of the outer membrane protein assembly complex, which is involved in assembly and insertion of beta-barrel proteins into the outer membrane. In Neisseria meningitidis serogroup B (strain ATCC BAA-335 / MC58), this protein is Outer membrane protein assembly factor BamA.